Consider the following 139-residue polypeptide: Holo-[acyl-carrier-protein] synthase (139 aa).

Mg(2+) is bound by residues aspartate 8 and glutamate 61.

The protein belongs to the P-Pant transferase superfamily. AcpS family. Mg(2+) serves as cofactor.

The protein localises to the cytoplasm. It catalyses the reaction apo-[ACP] + CoA = holo-[ACP] + adenosine 3',5'-bisphosphate + H(+). Functionally, transfers the 4'-phosphopantetheine moiety from coenzyme A to a Ser of acyl-carrier-protein. The polypeptide is Holo-[acyl-carrier-protein] synthase (Rhodopseudomonas palustris (strain BisA53)).